The primary structure comprises 382 residues: Lipid-A-disaccharide synthase (382 aa).

The protein belongs to the LpxB family.

The enzyme catalyses a lipid X + a UDP-2-N,3-O-bis[(3R)-3-hydroxyacyl]-alpha-D-glucosamine = a lipid A disaccharide + UDP + H(+). It participates in bacterial outer membrane biogenesis; LPS lipid A biosynthesis. Functionally, condensation of UDP-2,3-diacylglucosamine and 2,3-diacylglucosamine-1-phosphate to form lipid A disaccharide, a precursor of lipid A, a phosphorylated glycolipid that anchors the lipopolysaccharide to the outer membrane of the cell. The polypeptide is Lipid-A-disaccharide synthase (Alteromonas mediterranea (strain DSM 17117 / CIP 110805 / LMG 28347 / Deep ecotype)).